A 417-amino-acid polypeptide reads, in one-letter code: UDP-N-acetylglucosamine 1-carboxyvinyltransferase (417 aa).

22-23 serves as a coordination point for phosphoenolpyruvate; that stretch reads KN. R93 provides a ligand contact to UDP-N-acetyl-alpha-D-glucosamine. C117 acts as the Proton donor in catalysis. C117 carries the post-translational modification 2-(S-cysteinyl)pyruvic acid O-phosphothioketal. Residues 122–126, D304, and I326 each bind UDP-N-acetyl-alpha-D-glucosamine; that span reads RPVDQ.

It belongs to the EPSP synthase family. MurA subfamily.

Its subcellular location is the cytoplasm. It catalyses the reaction phosphoenolpyruvate + UDP-N-acetyl-alpha-D-glucosamine = UDP-N-acetyl-3-O-(1-carboxyvinyl)-alpha-D-glucosamine + phosphate. The protein operates within cell wall biogenesis; peptidoglycan biosynthesis. In terms of biological role, cell wall formation. Adds enolpyruvyl to UDP-N-acetylglucosamine. The protein is UDP-N-acetylglucosamine 1-carboxyvinyltransferase of Neisseria meningitidis serogroup B (strain ATCC BAA-335 / MC58).